A 676-amino-acid polypeptide reads, in one-letter code: RNA helicase NPH-II (676 aa).

Positions 172 to 347 (FSAWISHRPV…VFLPNPAFIH (176 aa)) constitute a Helicase ATP-binding domain. ATP is bound at residue 185 to 192 (GGTGVGKT). A DEXH box motif is present at residues 296-299 (DEVH). A Helicase C-terminal domain is found at 366–542 (NPSSRMAYIE…KFNLTLPEDL (177 aa)).

It belongs to the DEAD box helicase family. DEAH subfamily. Monomer.

It is found in the virion. The enzyme catalyses ATP + H2O = ADP + phosphate + H(+). Functionally, NTP-dependent helicase that catalyzes unidirectional unwinding of 3'tailed duplex RNAs and plays an important role during transcription of early mRNAs, presumably by preventing R-loop formation behind the elongating RNA polymerase. Might also play a role in the export of newly synthesized mRNA chains out of the core into the cytoplasm. Required for replication and propagation of viral particles. The sequence is that of RNA helicase NPH-II (OPG084) from Homo sapiens (Human).